Reading from the N-terminus, the 154-residue chain is Protein ripply (154 aa).

The short motif at 38–41 is the WRPW motif element; the sequence is WRPW. 2 disordered regions span residues 54–86 and 121–154; these read IRER…FQHP and EDPA…PILN. The ripply homology domain stretch occupies residues 85–119; the sequence is HPVKLHWSKPVYDYMYQYGKQLLDAFPVQATICIV. Acidic residues predominate over residues 121–140; the sequence is EDPAQSDDSDFESDYEDDSD.

It belongs to the ripply family. In terms of tissue distribution, in the late gastrula stage, expression appears in the dorsal presomitic mesoderm and in the first three pairs of nascent somites. Expressed strongly in forming somites and then expression is rapidly down-regulated except in the first somite pair where expression is maintained for a longer period. Also expressed in the presumptive notochord and in the tail bud at the 48 hour larval stage. Expression disappears by the 72 hour stage.

The protein resides in the nucleus. Its function is as follows. May play a role in somitogenesis. This chain is Protein ripply, found in Branchiostoma belcheri (Amphioxus).